The sequence spans 1016 residues: Coiled-coil domain-containing protein 57 (1016 aa).

The centrosomal targeting domain stretch occupies residues methionine 1–glutamine 503. Coiled-coil stretches lie at residues leucine 14–threonine 607, serine 676–lysine 700, and valine 748–methionine 775. 2 disordered regions span residues glutamine 500–serine 519 and histidine 549–proline 573. The tract at residues proline 604–aspartate 1016 is microtubule binding domain. Disordered stretches follow at residues alanine 781–serine 921 and glycine 933–aspartate 1016. 2 stretches are compositionally biased toward polar residues: residues glutamine 846 to proline 859 and serine 934 to serine 945.

As to quaternary structure, interacts with CEP63; the interaction is required for their location to proximal end of centrioles. Interacts with microtubules.

The protein resides in the cytoplasm. It is found in the cytoskeleton. It localises to the microtubule organizing center. The protein localises to the centrosome. Its subcellular location is the centriolar satellite. The protein resides in the centriole. It is found in the spindle. In terms of biological role, pleiotropic regulator of centriole duplication, mitosis, and ciliogenesis. Critical interface between centrosome and microtubule-mediated cellular processes. Centriole duplication protein required for recruitment of CEP63, CEP152, and PLK4 to the centrosome. Independent of its centrosomal targeting, localizes to and interacts with microtubules and regulates microtubule nucleation, stability, and mitotic progression. The polypeptide is Coiled-coil domain-containing protein 57 (Mus musculus (Mouse)).